The sequence spans 344 residues: S-adenosylmethionine:tRNA ribosyltransferase-isomerase (344 aa).

This sequence belongs to the QueA family. Monomer.

Its subcellular location is the cytoplasm. The enzyme catalyses 7-aminomethyl-7-carbaguanosine(34) in tRNA + S-adenosyl-L-methionine = epoxyqueuosine(34) in tRNA + adenine + L-methionine + 2 H(+). It functions in the pathway tRNA modification; tRNA-queuosine biosynthesis. Transfers and isomerizes the ribose moiety from AdoMet to the 7-aminomethyl group of 7-deazaguanine (preQ1-tRNA) to give epoxyqueuosine (oQ-tRNA). This is S-adenosylmethionine:tRNA ribosyltransferase-isomerase from Nitrosococcus oceani (strain ATCC 19707 / BCRC 17464 / JCM 30415 / NCIMB 11848 / C-107).